A 472-amino-acid polypeptide reads, in one-letter code: Estrogen receptor beta (472 aa).

Residues Met-1–Phe-104 form a modulating region. 2 consecutive NR C4-type zinc fingers follow at residues Cys-105–Cys-125 and Cys-141–Cys-165. Positions Cys-105–Met-170 form a DNA-binding region, nuclear receptor. The 233-residue stretch at Ser-217 to His-449 folds into the NR LBD domain.

Belongs to the nuclear hormone receptor family. NR3 subfamily. In terms of assembly, binds DNA as a homodimer. Can form a heterodimer with ER-alpha. As to expression, a high expression is seen in the telencephalon, diencephalon, pituitary, testis and kidneys but little or no expression is seen in the cerebellum, pectoral muscle and adrenal gland.

It is found in the nucleus. In terms of biological role, binds estrogens with an affinity similar to that of ER-alpha, and activates expression of reporter genes containing estrogen response elements (ERE) in an estrogen-dependent manner. This chain is Estrogen receptor beta (ESR2), found in Coturnix japonica (Japanese quail).